A 166-amino-acid chain; its full sequence is uncharacterized protein (166 aa).

Positions 28 to 55 (SRQVHPPWPVPCKSKLQEQDSSESKESK) are disordered. Residues 42–55 (KLQEQDSSESKESK) are compositionally biased toward basic and acidic residues. The 97-residue stretch at 67–163 (QNAMLYIENN…NYTPKQFKRT (97 aa)) folds into the HTH araC/xylS-type domain. 2 DNA-binding regions (H-T-H motif) span residues 84–105 (DTVA…KLAT) and 130–153 (VTET…KKRT).

This is an uncharacterized protein from Pseudoalteromonas carrageenovora (Alteromonas carrageenovora).